The chain runs to 568 residues: Sentrin-specific protease 3 (568 aa).

Residues 1–119 (MKETIQGTGS…PSHRKTCSQR (119 aa)) form a disordered region. Phosphoserine is present on residues Ser52, Ser71, and Ser73. Positions 72 to 87 (ASEEEEEEEEEDEEEV) are enriched in acidic residues. Positions 106–119 (RALRPSHRKTCSQR) are enriched in basic residues. Short sequence motifs (nuclear localization signal) lie at residues 119-122 (RRRR) and 147-153 (RHRGRRR). The disordered stretch occupies residues 155–174 (LAHPKNHLSPQEGGATPQVP). Ser163 carries the post-translational modification Phosphoserine. Phosphothreonine is present on Thr170. Ser175, Ser182, Ser206, and Ser226 each carry phosphoserine. Positions 380–537 (HVLTMDDLGT…AFVLQYCKHL (158 aa)) are protease. Active-site residues include His459 and Asp476. Cys526 functions as the Nucleophile in the catalytic mechanism.

Belongs to the peptidase C48 family. As to quaternary structure, component of some MLL1/MLL complex, at least composed of the core components KMT2A/MLL1, ASH2L, HCFC1/HCF1, WDR5 and RBBP5, as well as the facultative components BACC1, CHD8, E2F6, HSP70, INO80C, KANSL1, LAS1L, MAX, MCRS1, MGA, MYST1/MOF, PELP1, PHF20, PRP31, RING2, RUVB1/TIP49A, RUVB2/TIP49B, SENP3, TAF1, TAF4, TAF6, TAF7, TAF9 and TEX10. Interacts with EP300, NPM1 and CDCA8. Component of the 5FMC complex, at least composed of PELP1, LAS1L, TEX10, WDR18 and SENP3; the complex interacts with methylated CHTOP and ZNF148. Interacts with NOL9. Interacts with CCAR2.

The protein resides in the nucleus. It is found in the nucleolus. It localises to the nucleoplasm. Its subcellular location is the cytoplasm. On oxidative stress, SENP3 degradation is blocked by inhibition of its ubiquitination, which stabilizes it as it accumulates in the nucleoplasm. In terms of biological role, protease that releases SUMO2 and SUMO3 monomers from sumoylated substrates, but has only weak activity against SUMO1 conjugates. Deconjugates SUMO2 from MEF2D, which increases its transcriptional activation capability. Deconjugates SUMO2 and SUMO3 from CDCA8. Redox sensor that, when redistributed into nucleoplasm, can act as an effector to enhance HIF1A transcriptional activity by desumoylating EP300. Required for rRNA processing through deconjugation of SUMO2 and SUMO3 from nucleophosmin, NPM1. Plays a role in the regulation of sumoylation status of ZNF148. Functions as a component of the Five Friends of Methylated CHTOP (5FMC) complex; the 5FMC complex is recruited to ZNF148 by methylated CHTOP, leading to desumoylation of ZNF148 and subsequent transactivation of ZNF148 target genes. Deconjugates SUMO2 from KAT5. Catalyzes desumoylation of MRE11. The polypeptide is Sentrin-specific protease 3 (Senp3) (Mus musculus (Mouse)).